The primary structure comprises 242 residues: Small ribosomal subunit protein uS2 (242 aa).

The protein belongs to the universal ribosomal protein uS2 family.

This chain is Small ribosomal subunit protein uS2, found in Shewanella sediminis (strain HAW-EB3).